We begin with the raw amino-acid sequence, 433 residues long: Enolase (433 aa).

Q167 serves as a coordination point for (2R)-2-phosphoglycerate. The active-site Proton donor is E209. Mg(2+)-binding residues include D246, E291, and D318. 4 residues coordinate (2R)-2-phosphoglycerate: K343, R372, S373, and K394. K343 acts as the Proton acceptor in catalysis.

Belongs to the enolase family. Component of the RNA degradosome, a multiprotein complex involved in RNA processing and mRNA degradation. Mg(2+) serves as cofactor.

Its subcellular location is the cytoplasm. The protein localises to the secreted. The protein resides in the cell surface. The catalysed reaction is (2R)-2-phosphoglycerate = phosphoenolpyruvate + H2O. Its pathway is carbohydrate degradation; glycolysis; pyruvate from D-glyceraldehyde 3-phosphate: step 4/5. Functionally, catalyzes the reversible conversion of 2-phosphoglycerate (2-PG) into phosphoenolpyruvate (PEP). It is essential for the degradation of carbohydrates via glycolysis. The sequence is that of Enolase from Sodalis glossinidius (strain morsitans).